The sequence spans 226 residues: X-linked lymphocyte-regulated protein 3C (226 aa).

Residues 1 to 66 (MSSRKRKATD…QARKEKQDLV (66 aa)) form a disordered region. Over residues 8-18 (ATDTAGRHSRM) the composition is skewed to basic and acidic residues. Over residues 21 to 30 (NLSSDDSQNP) the composition is skewed to polar residues. 2 stretches are compositionally biased toward basic and acidic residues: residues 39–48 (EVLDAGREDI) and 56–66 (QQARKEKQDLV). The stretch at 155-210 (ESLTLQKNRMEEFKSLCEKYLEKLEVLRDSRGNSIAEELRRLIATLEIKLLMLHNQ) forms a coiled coil.

It belongs to the XLR/SYCP3 family. Expressed in lymphoid cells.

The protein is X-linked lymphocyte-regulated protein 3C (Xlr3c) of Mus musculus (Mouse).